Reading from the N-terminus, the 67-residue chain is Small ribosomal subunit protein bS21 (67 aa).

The protein belongs to the bacterial ribosomal protein bS21 family.

This is Small ribosomal subunit protein bS21 from Nitratidesulfovibrio vulgaris (strain DSM 19637 / Miyazaki F) (Desulfovibrio vulgaris).